We begin with the raw amino-acid sequence, 547 residues long: Hydroxylamine reductase (547 aa).

4 residues coordinate [4Fe-4S] cluster: cysteine 5, cysteine 8, cysteine 17, and cysteine 23. 8 residues coordinate hybrid [4Fe-2O-2S] cluster: histidine 242, glutamate 266, cysteine 310, cysteine 401, cysteine 429, cysteine 454, glutamate 489, and lysine 491. The residue at position 401 (cysteine 401) is a Cysteine persulfide.

It belongs to the HCP family. Requires [4Fe-4S] cluster as cofactor. Hybrid [4Fe-2O-2S] cluster is required as a cofactor.

Its subcellular location is the cytoplasm. It catalyses the reaction A + NH4(+) + H2O = hydroxylamine + AH2 + H(+). Its function is as follows. Catalyzes the reduction of hydroxylamine to form NH(3) and H(2)O. This is Hydroxylamine reductase from Thermoanaerobacter pseudethanolicus (strain ATCC 33223 / 39E) (Clostridium thermohydrosulfuricum).